The sequence spans 509 residues: 2,3-bisphosphoglycerate-independent phosphoglycerate mutase (509 aa).

Residues Asp-12 and Ser-62 each contribute to the Mn(2+) site. The active-site Phosphoserine intermediate is the Ser-62. Residues His-123, 153–154, Arg-185, Arg-191, 260–263, and Lys-333 each bind substrate; these read RD and RPDR. Mn(2+) contacts are provided by Asp-400, His-404, Asp-441, His-442, and His-460.

The protein belongs to the BPG-independent phosphoglycerate mutase family. Monomer. Mn(2+) serves as cofactor.

It carries out the reaction (2R)-2-phosphoglycerate = (2R)-3-phosphoglycerate. It functions in the pathway carbohydrate degradation; glycolysis; pyruvate from D-glyceraldehyde 3-phosphate: step 3/5. Functionally, catalyzes the interconversion of 2-phosphoglycerate and 3-phosphoglycerate. This is 2,3-bisphosphoglycerate-independent phosphoglycerate mutase from Clostridium botulinum (strain ATCC 19397 / Type A).